Reading from the N-terminus, the 312-residue chain is MKWSEISIHTKEEAVEAVSHILHEAGASGVAIEDPAELTKEREQQYGEIYALNPDEYPAEGVLIKAYFPQTDSLHETIAGVKSSIDVLPSYDIEIGTGNITVNEVNEEDWATAWKKYYHPVQISDTFTIVPTWEEYTPSSPEEKIIELDPGMAFGTGTHPTTTMCIRALEKTVQQGDTIIDVGTGSGVLSIAAAKLGASSVQAYDLDPVAVESAEMNVRLNKTDDIVSVGQNSLLEGIEGPVDLIVANLLAEIILLFPEDAARVVKSGGLFITSGIIAAKEKVISEALEKAGFTIEEVLRMEDWVAIIARNA.

4 residues coordinate S-adenosyl-L-methionine: Thr-162, Gly-183, Asp-205, and Asn-248.

Belongs to the methyltransferase superfamily. PrmA family.

The protein resides in the cytoplasm. It catalyses the reaction L-lysyl-[protein] + 3 S-adenosyl-L-methionine = N(6),N(6),N(6)-trimethyl-L-lysyl-[protein] + 3 S-adenosyl-L-homocysteine + 3 H(+). In terms of biological role, methylates ribosomal protein L11. In Bacillus cereus (strain ATCC 10987 / NRS 248), this protein is Ribosomal protein L11 methyltransferase.